Reading from the N-terminus, the 345-residue chain is Cysteinyl leukotriene receptor 2 (345 aa).

At 1-43 the chain is on the extracellular side; sequence MERKLMSLLPSISLSEMEPNSTLGNHNSNRSCTTENFKREFYP. Asn-20 and Asn-29 each carry an N-linked (GlcNAc...) asparagine glycan. A helical transmembrane segment spans residues 44 to 64; that stretch reads IVYLVIFIWGALGNGFSIYVF. Residues 65 to 73 lie on the Cytoplasmic side of the membrane; that stretch reads LKPYKKSTS. A helical membrane pass occupies residues 74–94; that stretch reads VNVFMLNLAISDLLFTITLPF. At 95 to 124 the chain is on the extracellular side; the sequence is RVDYYLRGSNXIFGDTPCRIMSYSMYVNMY. Cys-112 and Cys-188 are joined by a disulfide. The chain crosses the membrane as a helical span at residues 125 to 145; sequence SSIYFLTVLSVVRFLATVHPF. Residues 146–154 are Cytoplasmic-facing; the sequence is RLLHTTSIK. The chain crosses the membrane as a helical span at residues 155–175; that stretch reads NAWILCGVIWIFIMASSTVLL. The Extracellular segment spans residues 176 to 205; that stretch reads KNGSEQKDNVTLCLELNSNKVTKLKTMNYV. Asn-177 and Asn-184 each carry an N-linked (GlcNAc...) asparagine glycan. A helical transmembrane segment spans residues 206–226; it reads ALVVGFVLPFGTLSICYLLII. Topologically, residues 227 to 246 are cytoplasmic; that stretch reads RALLKVEVPESGLRLSHRKA. Residues 247 to 267 traverse the membrane as a helical segment; that stretch reads LITVIIALIIFLLCFLPYHVL. The Extracellular portion of the chain corresponds to 268–287; that stretch reads RTLHLLEWKADKCKDRLHKA. The chain crosses the membrane as a helical span at residues 288-308; sequence VAVTLALAAANSCFNPFLYYF. At 309 to 345 the chain is on the cytoplasmic side; that stretch reads AGENFKDRLKSALRKGRPQKTRCGFSVCVWLKKETRV.

The protein belongs to the G-protein coupled receptor 1 family.

The protein localises to the cell membrane. Receptor for cysteinyl leukotrienes. The response is mediated via a G-protein that activates a phosphatidylinositol-calcium second messenger system. This chain is Cysteinyl leukotriene receptor 2 (CYSLTR2), found in Sus scrofa (Pig).